Here is a 291-residue protein sequence, read N- to C-terminus: UDP-N-acetylenolpyruvoylglucosamine reductase (291 aa).

One can recognise an FAD-binding PCMH-type domain in the interval 19-186; it reads GIGGPAEWIA…VSARLKLASG (168 aa). Arg165 is a catalytic residue. The active-site Proton donor is Ser215. The active site involves Glu285.

Belongs to the MurB family. FAD is required as a cofactor.

It localises to the cytoplasm. It catalyses the reaction UDP-N-acetyl-alpha-D-muramate + NADP(+) = UDP-N-acetyl-3-O-(1-carboxyvinyl)-alpha-D-glucosamine + NADPH + H(+). Its pathway is cell wall biogenesis; peptidoglycan biosynthesis. Cell wall formation. In Prochlorococcus marinus (strain NATL2A), this protein is UDP-N-acetylenolpyruvoylglucosamine reductase.